Here is a 642-residue protein sequence, read N- to C-terminus: Threonine--tRNA ligase (642 aa).

The 61-residue stretch at methionine 1–threonine 61 folds into the TGS domain. The segment at aspartate 243–proline 534 is catalytic. Zn(2+) is bound by residues cysteine 334, histidine 385, and histidine 511.

This sequence belongs to the class-II aminoacyl-tRNA synthetase family. Homodimer. Requires Zn(2+) as cofactor.

The protein localises to the cytoplasm. It carries out the reaction tRNA(Thr) + L-threonine + ATP = L-threonyl-tRNA(Thr) + AMP + diphosphate + H(+). In terms of biological role, catalyzes the attachment of threonine to tRNA(Thr) in a two-step reaction: L-threonine is first activated by ATP to form Thr-AMP and then transferred to the acceptor end of tRNA(Thr). Also edits incorrectly charged L-seryl-tRNA(Thr). This chain is Threonine--tRNA ligase, found in Shewanella baltica (strain OS195).